Here is a 323-residue protein sequence, read N- to C-terminus: Forkhead transcription factor fkh-6 (323 aa).

The fork-head DNA-binding region spans 21–122; that stretch reads KPPYSYVALI…DNGNFKRRRV (102 aa).

Its subcellular location is the nucleus. Functionally, probable transcription factor. Binds to the DNA sequence motif 5'-[TA]TGTT[TG]T[TG][ATG]TT-3'. Regulates sexual dimorphism in the gonad, promoting male gonadal cell fates in chromosomally (XO) male animals, yet plays a role in gonadogenesis in both sexes; probably acts downstream of terminal regulator of sex determination tra-1, to control early gonadogenesis. Positively modulates expression of homeobox protein egl-5, probably acting indirectly, during early gonadal development. The polypeptide is Forkhead transcription factor fkh-6 (Caenorhabditis elegans).